A 427-amino-acid polypeptide reads, in one-letter code: Outer capsid protein P8 (427 aa).

Belongs to the phytoreovirus outer capsid protein P8 family. In terms of assembly, homotrimer. Homomultimer.

It localises to the virion. The protein resides in the host cytoplasm. In terms of biological role, capsid protein which self-assembles to form the outer icosahedral capsid with a T=13 symmetry, about 70 nm in diameter and consisting of 780 molecules capsid proteins. The protein is Outer capsid protein P8 of Catharanthus roseus (Madagascar periwinkle).